Consider the following 471-residue polypeptide: Zinc finger protein 385B (471 aa).

The interval Met-1 to Leu-93 is required for induction of apoptosis. The segment at Ser-34–Gln-64 adopts a Matrin-type 1 zinc-finger fold. Disordered regions lie at residues Gln-50 to Thr-92 and His-175 to Glu-275. Residues Ala-76–Thr-92 show a composition bias toward low complexity. Positions Pro-94–Tyr-471 are interaction with p53/TP53. The segment at Ile-157–Ala-187 adopts a Matrin-type 2 zinc-finger fold. A compositionally biased stretch (polar residues) spans Ala-206–Ser-220. Low complexity predominate over residues Lys-230 to Gly-250. The segment covering Thr-260–Ala-269 has biased composition (polar residues). Residues Lys-282–Arg-316 form a Matrin-type 3 zinc finger. Residues Gly-318–Gly-340 form a disordered region. Residues Phe-348–Gly-378 form a Matrin-type 4 zinc finger.

As to quaternary structure, interacts with p53/TP53; the interaction is direct. In terms of tissue distribution, detected in germinal center of lymph node (at protein level). Expressed in spleen, lymph node and tonsil.

It localises to the nucleus. In terms of biological role, may play a role in p53/TP53-mediated apoptosis. The sequence is that of Zinc finger protein 385B (ZNF385B) from Homo sapiens (Human).